The sequence spans 482 residues: Guanine nucleotide exchange factor SRM1 (482 aa).

Polar residues predominate over residues 1–11 (MVKRTVATNGD). The segment at 1–22 (MVKRTVATNGDASGAHRAKKMS) is disordered. A Nuclear localization signal motif is present at residues 15–26 (AHRAKKMSKTHA). RCC1 repeat units follow at residues 45 to 101 (PLDI…ALDE), 103 to 152 (SNVW…TPAK), 183 to 238 (NGEV…FLDE), 239 to 291 (EGMV…ALTK), 292 to 347 (DNKL…ILSQ), 349 to 411 (GDLY…AVAQ), and 412 to 466 (NGIA…SGGV). Positions 128 to 158 (KDMDADDSSDDEDGDLNELESTPAKIPRESF) are disordered. Acidic residues predominate over residues 131–145 (DADDSSDDEDGDLNE). Residues S135 and S136 each carry the phosphoserine modification.

In terms of assembly, component of a multicomponent complex composed of six to seven proteins, which has a collective molecular mass greater than 150 kDa. Interacts with GSP1 and YRB2. In terms of processing, phosphorylated; possibly by KSP1.

Its subcellular location is the nucleus. Guanine nucleotide exchange factor that promotes the exchange of GSP1/GSP2-bound GDP by GTP and controls RNA metabolism and transport. Involved in yeast pheromone response pathway and in mRNA metabolism. Involved in nuclear pore complex (NPC) assembly and required for mRNA and ribosome nuclear export. Binds chromatin and is involved NPC-mediated transcriptional control. This Saccharomyces cerevisiae (strain ATCC 204508 / S288c) (Baker's yeast) protein is Guanine nucleotide exchange factor SRM1 (SRM1).